The chain runs to 567 residues: Asparagine--tRNA ligase, chloroplastic/mitochondrial (567 aa).

The OB DNA-binding region spans 113 to 191 (NIMGWVRTLR…VELKVEKIIV (79 aa)).

This sequence belongs to the class-II aminoacyl-tRNA synthetase family.

The protein resides in the plastid. It localises to the chloroplast. Its subcellular location is the mitochondrion. It catalyses the reaction tRNA(Asn) + L-asparagine + ATP = L-asparaginyl-tRNA(Asn) + AMP + diphosphate + H(+). This is Asparagine--tRNA ligase, chloroplastic/mitochondrial from Arabidopsis thaliana (Mouse-ear cress).